Consider the following 577-residue polypeptide: Aspartate--tRNA ligase (577 aa).

An L-aspartate-binding site is contributed by Glu-171. The tract at residues 195–198 is aspartate; that stretch reads QLFK. L-aspartate is bound at residue Arg-217. ATP contacts are provided by residues 217–219 and Gln-226; that span reads RDE. His-437 contacts L-aspartate. Residue Glu-472 participates in ATP binding. Arg-479 contributes to the L-aspartate binding site. Position 524 to 527 (524 to 527) interacts with ATP; that stretch reads GFDR.

It belongs to the class-II aminoacyl-tRNA synthetase family. Type 1 subfamily. As to quaternary structure, homodimer.

Its subcellular location is the cytoplasm. It carries out the reaction tRNA(Asp) + L-aspartate + ATP = L-aspartyl-tRNA(Asp) + AMP + diphosphate. Catalyzes the attachment of L-aspartate to tRNA(Asp) in a two-step reaction: L-aspartate is first activated by ATP to form Asp-AMP and then transferred to the acceptor end of tRNA(Asp). The sequence is that of Aspartate--tRNA ligase from Deinococcus deserti (strain DSM 17065 / CIP 109153 / LMG 22923 / VCD115).